The sequence spans 540 residues: T-complex protein 1 subunit delta (540 aa).

Residues 1–12 (MPPAVPAAAATA) show a composition bias toward low complexity. A disordered region spans residues 1 to 32 (MPPAVPAAAATARQSASGRERNFKDKDKPESV). Residues 18 to 31 (GRERNFKDKDKPES) are compositionally biased toward basic and acidic residues.

Belongs to the TCP-1 chaperonin family. As to quaternary structure, heterooligomeric complex of about 850 to 900 kDa that forms two stacked rings, 12 to 16 nm in diameter.

Its subcellular location is the cytoplasm. In terms of biological role, molecular chaperone; assists the folding of proteins upon ATP hydrolysis. Known to play a role, in vitro, in the folding of actin and tubulin. The sequence is that of T-complex protein 1 subunit delta (cct-4) from Caenorhabditis elegans.